We begin with the raw amino-acid sequence, 294 residues long: S-adenosylmethionine uptake transporter (294 aa).

Helical transmembrane passes span 4–24, 41–61, 74–91, 98–118, 121–141, 148–168, 178–198, 207–227, 237–257, and 260–280; these read ALKT…TSSI, VAFF…VYYG, VLRG…TYGL, TATV…VFIL, NIIW…VVML, FNPE…LDII, MLSM…PVAM, FELA…FFLL, ATAP…YFIF, and FPDK…LFII. 2 consecutive EamA domains span residues 22–141 and 160–280; these read SSIN…VVML and ISFA…LFII.

This sequence belongs to the drug/metabolite transporter (DMT) superfamily. 10 TMS drug/metabolite exporter (DME) (TC 2.A.7.3) family.

Its subcellular location is the cell inner membrane. With respect to regulation, transport is inhibited by S-adenosylethionine and to a lesser extent by S-adenosylhomocysteine. Unlike eukaryotic transporters is not inhibited by sinfungin. Also inhibited by 2.4-dinitrophenol, suggesting transport is an energy-dependent process. Its function is as follows. Transports S-adenosylmethionine. This is S-adenosylmethionine uptake transporter (sam) from Rickettsia prowazekii (strain Madrid E).